A 255-amino-acid chain; its full sequence is Thiazole synthase (255 aa).

The Schiff-base intermediate with DXP role is filled by Lys-96. Residues Gly-157, 183–184 (AG), and 205–206 (NT) contribute to the 1-deoxy-D-xylulose 5-phosphate site.

This sequence belongs to the ThiG family. In terms of assembly, homotetramer. Forms heterodimers with either ThiH or ThiS.

It is found in the cytoplasm. The catalysed reaction is [ThiS sulfur-carrier protein]-C-terminal-Gly-aminoethanethioate + 2-iminoacetate + 1-deoxy-D-xylulose 5-phosphate = [ThiS sulfur-carrier protein]-C-terminal Gly-Gly + 2-[(2R,5Z)-2-carboxy-4-methylthiazol-5(2H)-ylidene]ethyl phosphate + 2 H2O + H(+). The protein operates within cofactor biosynthesis; thiamine diphosphate biosynthesis. Catalyzes the rearrangement of 1-deoxy-D-xylulose 5-phosphate (DXP) to produce the thiazole phosphate moiety of thiamine. Sulfur is provided by the thiocarboxylate moiety of the carrier protein ThiS. In vitro, sulfur can be provided by H(2)S. This is Thiazole synthase from Staphylococcus epidermidis (strain ATCC 12228 / FDA PCI 1200).